The chain runs to 51 residues: Basic phospholipase A2 Bfon11 (51 aa).

Residues Tyr27, Gly29, and Gly31 each contribute to the Ca(2+) site. Cysteines 28 and 43 form a disulfide. His46 is an active-site residue. A Ca(2+)-binding site is contributed by Asp47.

The protein belongs to the phospholipase A2 family. Group II subfamily. D49 sub-subfamily. The cofactor is Ca(2+). Expressed by the venom gland.

The protein localises to the secreted. The catalysed reaction is a 1,2-diacyl-sn-glycero-3-phosphocholine + H2O = a 1-acyl-sn-glycero-3-phosphocholine + a fatty acid + H(+). Functionally, snake venom phospholipase A2 (PLA2) that impairs hemostasis. PLA2 catalyzes the calcium-dependent hydrolysis of the 2-acyl groups in 3-sn-phosphoglycerides. This is Basic phospholipase A2 Bfon11 from Bothrops fonsecai (Fonseca's lancehead).